The primary structure comprises 836 residues: Spliceosome associated factor 3, U4/U6 recycling protein (836 aa).

HAT repeat units follow at residues 127 to 163 (EDFK…YEMS), 296 to 329 (KLPQ…FERD), 331 to 367 (RPNE…LLRR), 418 to 451 (KNMD…LERQ), and 453 to 486 (GDKE…FERE). The interval 507–585 (RAIRPQKKVS…APGSFAVQKA (79 aa)) is disordered. Residues 540–550 (IVKKVKGDDGG) show a composition bias toward basic and acidic residues. The span at 558 to 579 (SNAKSSSAVSSSNASSTPAPGS) shows a compositional bias: low complexity. RRM domains follow at residues 593–668 (RTIF…ANDP) and 683–760 (SKVF…LSNP). Disordered regions lie at residues 757–786 (LSNP…PRKG) and 811–830 (AMDV…DQFR). The span at 816-827 (EGTSTSQPLSND) shows a compositional bias: polar residues.

In terms of assembly, forms a complex composed of sart-3, terminal uridylyltransferase usip-1 and U6 snRNA; complex formation is mediated by usip-1 and sart-3 binding to U6 snRNA. Associates with U4 and U6 snRNP complexes, probably by interacting with U4 and U6 snRNAs. Ubiquitously expressed.

The protein localises to the nucleus. Its subcellular location is the nucleoplasm. Functionally, U6 snRNP-binding protein that functions as a recycling factor of the splicing machinery. Promotes the initial reassembly of U4 and U6 snRNPs following their ejection from the spliceosome during its maturation. In Caenorhabditis elegans, this protein is Spliceosome associated factor 3, U4/U6 recycling protein.